Here is a 602-residue protein sequence, read N- to C-terminus: Elongation factor 4 (602 aa).

In terms of domain architecture, tr-type G spans 7–189; it reads KFIRNFSIIA…QLVVAIPPPV (183 aa). GTP is bound by residues 19–24 and 136–139; these read DHGKST and NKID.

This sequence belongs to the TRAFAC class translation factor GTPase superfamily. Classic translation factor GTPase family. LepA subfamily.

The protein localises to the cell inner membrane. It catalyses the reaction GTP + H2O = GDP + phosphate + H(+). Functionally, required for accurate and efficient protein synthesis under certain stress conditions. May act as a fidelity factor of the translation reaction, by catalyzing a one-codon backward translocation of tRNAs on improperly translocated ribosomes. Back-translocation proceeds from a post-translocation (POST) complex to a pre-translocation (PRE) complex, thus giving elongation factor G a second chance to translocate the tRNAs correctly. Binds to ribosomes in a GTP-dependent manner. The polypeptide is Elongation factor 4 (Coxiella burnetii (strain RSA 493 / Nine Mile phase I)).